Here is a 527-residue protein sequence, read N- to C-terminus: Probable malate:quinone oxidoreductase (527 aa).

The protein belongs to the MQO family. The cofactor is FAD.

The enzyme catalyses (S)-malate + a quinone = a quinol + oxaloacetate. Its pathway is carbohydrate metabolism; tricarboxylic acid cycle; oxaloacetate from (S)-malate (quinone route): step 1/1. This chain is Probable malate:quinone oxidoreductase, found in Pectobacterium carotovorum subsp. carotovorum (strain PC1).